Consider the following 194-residue polypeptide: PRELI domain containing protein 3B (194 aa).

Positions Met1 to Glu172 constitute a PRELI/MSF1 domain. 2 positions are modified to phosphoserine: Ser46 and Ser51.

The protein belongs to the slowmo family.

This is PRELI domain containing protein 3B (PRELID3B) from Homo sapiens (Human).